The chain runs to 511 residues: Cytochrome P450 monooxygenase prhD (511 aa).

A glycan (N-linked (GlcNAc...) asparagine) is linked at asparagine 7. The helical transmembrane segment at 10 to 30 threads the bilayer; it reads GNGMGLLIPLGLSWLIWTILL. Cysteine 444 is a heme binding site. The N-linked (GlcNAc...) asparagine glycan is linked to asparagine 502.

This sequence belongs to the cytochrome P450 family. The cofactor is heme.

It is found in the membrane. It functions in the pathway secondary metabolite biosynthesis; terpenoid biosynthesis. Cytochrome P450 monooxygenase; part of the gene cluster that mediates the biosynthesis of paraherquonin, a meroterpenoid with a unique, highly congested hexacyclic molecular architecture. The first step of the pathway is the synthesis of 3,5-dimethylorsellinic acid (DMOA) by the polyketide synthase prhL. Synthesis of DMOA is followed by farnesylation by the prenyltransferase prhE, methylesterification by the methyl-transferase prhM, epoxidation of the prenyl chain by the flavin-dependent monooxygenase prhF, and cyclization of the farnesyl moiety by the terpene cyclase prhH, to yield the tetracyclic intermediate, protoaustinoid A. The short chain dehydrogenase prhI then oxidizes the C-3 alcohol group of the terpene cyclase product to transform protoaustinoid A into protoaustinoid B. The FAD-binding monooxygenase prhJ catalyzes the oxidation of protoaustinoid B into preaustinoid A which is further oxidized into preaustinoid A1 by FAD-binding monooxygenase phrK. Finally, prhA leads to berkeleydione via the berkeleyone B intermediate. PrhA is a multifunctional dioxygenase that first desaturates at C5-C6 to form berkeleyone B, followed by rearrangement of the A/B-ring to form the cycloheptadiene moiety in berkeleydione. Berkeleydione serves as the key intermediate for the biosynthesis of paraherquonin as well as many other meroterpenoids. The cytochrome P450 monooxygenases prhB, prhD, and prhN, as well as the isomerase prhC, are probably involved in the late stage of paraherquonin biosynthesis, after the production of berkeleydione. Especially prhC might be a multifunctional enzyme that catalyzes the D-ring expansion via intramolecular methoxy rearrangement, as well as the hydrolysis of the expanded D-ring. The protein is Cytochrome P450 monooxygenase prhD of Penicillium brasilianum.